A 1368-amino-acid polypeptide reads, in one-letter code: DNA-directed RNA polymerase subunit beta (1368 aa).

It belongs to the RNA polymerase beta chain family. As to quaternary structure, the RNAP catalytic core consists of 2 alpha, 1 beta, 1 beta' and 1 omega subunit. When a sigma factor is associated with the core the holoenzyme is formed, which can initiate transcription.

It carries out the reaction RNA(n) + a ribonucleoside 5'-triphosphate = RNA(n+1) + diphosphate. DNA-dependent RNA polymerase catalyzes the transcription of DNA into RNA using the four ribonucleoside triphosphates as substrates. This Burkholderia pseudomallei (strain K96243) protein is DNA-directed RNA polymerase subunit beta.